A 781-amino-acid chain; its full sequence is MERVEGWLIDADYETIGGKAVVRLWCKDDQGIFVAYDYNFDPYFYVIGVDEDILKNAATSTRREVIKLKSFEKAQLKTLGREVEGYIVYAHHPQHVPKLRDYLSQFGDVREADIPFAYRYLIDKDLACMDGIAIEGEKQGGVIRSYKIEKVERIPRMEFPELKMLVFDCEMLSSFGMPEPEKDPIIVISVKTNDDDEIILTGDERKIISDFVKLIKSYDPDIIVGYNQDAFDWPYLRKRAERWNIPLDVGRDGSNVVFRGGRPKITGRLNVDLYDIAMRISDIKIKKLENVAEFLGTKIEIADIEAKDIYRYWSRGEKEKVLNYARQDAINTYLIAKELLPMHYELSKMIRLPVDDVTRMGRGKQVDWLLLSEAKKIGEIAPNPPEHAESYEGAFVLEPERGLHENVACLDFASMYPSIMIAFNISPDTYGCRDDCYEAPEVGHKFRKSPDGFFKRILRMLIEKRRELKVELKNLSPESSEYKLLDIKQQTLKVLTNSFYGYMGWNLARWYCHPCAEATTAWGRHFIRTSAKIAESMGFKVLYGDTDSIFVTKAGMTKEDVDRLIDKLHEELPIQIEVDEYYSAIFFVEKKRYAGLTEDGRLVVKGLEVRRGDWCELAKKVQREVIEVILKEKNPEKALSLVKDVILRIKEGKVSLEEVVIYKGLTKKPSKYESMQAHVKAALKAREMGIIYPVSSKIGYVIVKGSGNIGDRAYPIDLIEDFDGENLRIKTKSGIEIKKLDKDYYIDNQIIPSVLRILERFGYTEASLKGSSQMSLDSFFS.

Belongs to the DNA polymerase type-B family.

It carries out the reaction DNA(n) + a 2'-deoxyribonucleoside 5'-triphosphate = DNA(n+1) + diphosphate. The chain is DNA polymerase (pol) from Archaeoglobus fulgidus (strain ATCC 49558 / DSM 4304 / JCM 9628 / NBRC 100126 / VC-16).